The primary structure comprises 91 residues: MARSIKKGPYVEESLLRKADFEGGAGSKKVIKTWSRRSTIIPEFVGYTFAVHNGKKFIPVFVTENMVGHKLGEFAPTRTYYGHGADKKGKR.

Belongs to the universal ribosomal protein uS19 family.

Functionally, protein S19 forms a complex with S13 that binds strongly to the 16S ribosomal RNA. In Syntrophotalea carbinolica (strain DSM 2380 / NBRC 103641 / GraBd1) (Pelobacter carbinolicus), this protein is Small ribosomal subunit protein uS19.